The primary structure comprises 250 residues: DNA repair protein RecO (250 aa).

This sequence belongs to the RecO family.

Functionally, involved in DNA repair and RecF pathway recombination. This chain is DNA repair protein RecO, found in Rhodopseudomonas palustris (strain TIE-1).